The chain runs to 153 residues: 3-hydroxyacyl-[acyl-carrier-protein] dehydratase FabZ (153 aa).

The active site involves histidine 47.

Belongs to the thioester dehydratase family. FabZ subfamily.

The protein resides in the cytoplasm. It catalyses the reaction a (3R)-hydroxyacyl-[ACP] = a (2E)-enoyl-[ACP] + H2O. Involved in unsaturated fatty acids biosynthesis. Catalyzes the dehydration of short chain beta-hydroxyacyl-ACPs and long chain saturated and unsaturated beta-hydroxyacyl-ACPs. This is 3-hydroxyacyl-[acyl-carrier-protein] dehydratase FabZ from Dichelobacter nodosus (strain VCS1703A).